The following is a 500-amino-acid chain: Hepatic triacylglycerol lipase (500 aa).

A signal peptide spans 1–21 (MENPLCVSIFLFYCILIQSSA). Residues 23 to 44 (GQSLGPESFGRRSRAAETNKTP) form a disordered region. 2 N-linked (GlcNAc...) asparagine glycosylation sites follow: Asn-67 and Asn-78. Ser-168 serves as the catalytic Nucleophile. Asp-194 (charge relay system) is an active-site residue. The interval 254–277 (CHFLELYKHFAKHGLNAITRTVKC) is essential for determining substrate specificity. Catalysis depends on His-279, which acts as the Charge relay system. Residues 353–487 (YHYQFKIRFI…HPAREKTFVR (135 aa)) enclose the PLAT domain. Asn-363 and Asn-398 each carry an N-linked (GlcNAc...) asparagine glycan.

The protein belongs to the AB hydrolase superfamily. Lipase family. In terms of assembly, homodimer.

Its subcellular location is the secreted. The catalysed reaction is a triacylglycerol + H2O = a diacylglycerol + a fatty acid + H(+). It carries out the reaction a 1-acyl-sn-glycero-3-phosphocholine + H2O = sn-glycerol 3-phosphocholine + a fatty acid + H(+). It catalyses the reaction a 1,2-diacyl-sn-glycero-3-phosphocholine + H2O = a 2-acyl-sn-glycero-3-phosphocholine + a fatty acid + H(+). The enzyme catalyses 1,2,3-tri-(9Z-octadecenoyl)-glycerol + H2O = di-(9Z)-octadecenoylglycerol + (9Z)-octadecenoate + H(+). The catalysed reaction is 1,2-di-(9Z-octadecenoyl)-sn-glycero-3-phosphocholine + H2O = (9Z-octadecenoyl)-sn-glycero-3-phosphocholine + (9Z)-octadecenoate + H(+). It carries out the reaction 1,2,3-tributanoylglycerol + H2O = dibutanoylglycerol + butanoate + H(+). It catalyses the reaction 1,2-dihexadecanoyl-sn-glycero-3-phosphocholine + H2O = hexadecanoyl-sn-glycero-3-phosphocholine + hexadecanoate + H(+). The enzyme catalyses 1,2-di-(9Z-octadecenoyl)-sn-glycerol + H2O = 2-(9Z-octadecenoyl)-glycerol + (9Z)-octadecenoate + H(+). The catalysed reaction is 1,2,3-tri-(9Z-octadecenoyl)-glycerol + H2O = 2,3-di-(9Z)-octadecenoyl-sn-glycerol + (9Z)-octadecenoate + H(+). It carries out the reaction 1-(9Z-octadecenoyl)-sn-glycero-3-phospho-L-serine + H2O = sn-glycero-3-phospho-L-serine + (9Z)-octadecenoate + H(+). It catalyses the reaction 1-hexadecanoyl-sn-glycero-3-phosphocholine + H2O = sn-glycerol 3-phosphocholine + hexadecanoate + H(+). The enzyme catalyses 1,3-di-(9Z-octadecenoyl)-glycerol + H2O = 3-(9Z-octadecenoyl)-sn-glycerol + (9Z)-octadecenoate + H(+). Functionally, catalyzes the hydrolysis of triglycerides and phospholipids present in circulating plasma lipoproteins, including chylomicrons, intermediate density lipoproteins (IDL), low density lipoproteins (LDL) of large size and high density lipoproteins (HDL), releasing free fatty acids (FFA) and smaller lipoprotein particles. Also exhibits lysophospholipase activity. Can hydrolyze both neutral lipid and phospholipid substrates but shows a greater binding affinity for neutral lipid substrates than phospholipid substrates. In native LDL, preferentially hydrolyzes the phosphatidylcholine species containing polyunsaturated fatty acids at sn-2 position. This Bos taurus (Bovine) protein is Hepatic triacylglycerol lipase (LIPC).